Consider the following 261-residue polypeptide: Kallikrein 1-related peptidase b9 (261 aa).

The signal sequence occupies residues 1–18; that stretch reads MRFLILFLALSLGGIDAA. The propeptide at 19–24 is activation peptide; the sequence is PPVHSR. Positions 25-258 constitute a Peptidase S1 domain; sequence IVGGFKCEKN…FTSWIKDTMA (234 aa). Disulfide bonds link Cys31–Cys173, Cys50–Cys66, Cys152–Cys219, Cys184–Cys198, and Cys209–Cys234. The Charge relay system role is filled by His65. N-linked (GlcNAc...) asparagine glycosylation is present at Asn102. Asp120 functions as the Charge relay system in the catalytic mechanism. Ser213 (charge relay system) is an active-site residue.

Belongs to the peptidase S1 family. Kallikrein subfamily.

The catalysed reaction is Preferential cleavage of Arg-|-Xaa bonds in small molecule substrates. Highly selective action to release kallidin (lysyl-bradykinin) from kininogen involves hydrolysis of Met-|-Xaa or Leu-|-Xaa.. Functionally, glandular kallikreins cleave Met-Lys and Arg-Ser bonds in kininogen to release Lys-bradykinin. This Mus musculus (Mouse) protein is Kallikrein 1-related peptidase b9 (Klk1b9).